The primary structure comprises 135 residues: Small ribosomal subunit protein uS12 (135 aa).

Residue aspartate 89 is modified to 3-methylthioaspartic acid. The disordered stretch occupies residues 106–135; sequence GVANRRQSRSKYGAKRPKAGAAQATKGGKK. Positions 111–123 are enriched in basic residues; sequence RQSRSKYGAKRPK. Positions 124–135 are enriched in low complexity; it reads AGAAQATKGGKK.

Belongs to the universal ribosomal protein uS12 family. In terms of assembly, part of the 30S ribosomal subunit. Contacts proteins S8 and S17. May interact with IF1 in the 30S initiation complex.

In terms of biological role, with S4 and S5 plays an important role in translational accuracy. Interacts with and stabilizes bases of the 16S rRNA that are involved in tRNA selection in the A site and with the mRNA backbone. Located at the interface of the 30S and 50S subunits, it traverses the body of the 30S subunit contacting proteins on the other side and probably holding the rRNA structure together. The combined cluster of proteins S8, S12 and S17 appears to hold together the shoulder and platform of the 30S subunit. This chain is Small ribosomal subunit protein uS12, found in Hydrogenobaculum sp. (strain Y04AAS1).